The chain runs to 237 residues: Ubiquitin-conjugating enzyme E2 34 (237 aa).

The region spanning 5–162 is the UBC core domain; sequence ACIKRLQKEY…FPEYVEKYNQ (158 aa). The Glycyl thioester intermediate role is filled by C87. A disordered region spans residues 168 to 207; that stretch reads QATTQLTTPESPQKSDTKVESEKTIDPTKGDSEGGLKERK. Residues 180–204 are compositionally biased toward basic and acidic residues; that stretch reads QKSDTKVESEKTIDPTKGDSEGGLK. Residues 214-234 form a helical membrane-spanning segment; that stretch reads LPAWIILLLVSVFGVVMALPL.

This sequence belongs to the ubiquitin-conjugating enzyme family.

It localises to the membrane. The catalysed reaction is S-ubiquitinyl-[E1 ubiquitin-activating enzyme]-L-cysteine + [E2 ubiquitin-conjugating enzyme]-L-cysteine = [E1 ubiquitin-activating enzyme]-L-cysteine + S-ubiquitinyl-[E2 ubiquitin-conjugating enzyme]-L-cysteine.. Its pathway is protein modification; protein ubiquitination. Accepts the ubiquitin from the E1 complex and catalyzes its covalent attachment to other proteins. This Arabidopsis thaliana (Mouse-ear cress) protein is Ubiquitin-conjugating enzyme E2 34 (UBC34).